Consider the following 557-residue polypeptide: Urocanate hydratase (557 aa).

Residues 52-53, Gln130, 176-178, Glu196, Arg201, 242-243, 263-267, 273-274, and Tyr322 contribute to the NAD(+) site; these read GG, GMG, NA, QTSAH, and YL. Cys410 is an active-site residue. Gly492 contacts NAD(+).

Belongs to the urocanase family. NAD(+) is required as a cofactor.

It is found in the cytoplasm. The enzyme catalyses 4-imidazolone-5-propanoate = trans-urocanate + H2O. It participates in amino-acid degradation; L-histidine degradation into L-glutamate; N-formimidoyl-L-glutamate from L-histidine: step 2/3. Functionally, catalyzes the conversion of urocanate to 4-imidazolone-5-propionate. The sequence is that of Urocanate hydratase from Allorhizobium ampelinum (strain ATCC BAA-846 / DSM 112012 / S4) (Agrobacterium vitis (strain S4)).